We begin with the raw amino-acid sequence, 337 residues long: 4-hydroxy-2-oxovalerate aldolase (337 aa).

In terms of domain architecture, Pyruvate carboxyltransferase spans 6-256; it reads IRIMDTTLRD…ETGIDLFQIM (251 aa). Position 14–15 (14–15) interacts with substrate; sequence RD. D15 contacts Mn(2+). H18 (proton acceptor) is an active-site residue. 2 residues coordinate substrate: S168 and H195. Residues H195 and H197 each coordinate Mn(2+). Y286 lines the substrate pocket.

It belongs to the 4-hydroxy-2-oxovalerate aldolase family.

It carries out the reaction (S)-4-hydroxy-2-oxopentanoate = acetaldehyde + pyruvate. This chain is 4-hydroxy-2-oxovalerate aldolase (nahM), found in Geobacillus genomosp. 3.